An 83-amino-acid polypeptide reads, in one-letter code: Hainantoxin-III 8 (83 aa).

The N-terminal stretch at 1–21 (MKASMFLALAGLVLLFVVGYA) is a signal peptide. Residues 22–48 (SESEEKEFPRELLSKIFAVDDFTGEER) constitute a propeptide that is removed on maturation. 3 cysteine pairs are disulfide-bonded: Cys-50–Cys-65, Cys-57–Cys-70, and Cys-64–Cys-77. A Leucine amide modification is found at Leu-81.

The protein belongs to the neurotoxin 10 (Hwtx-1) family. 15 (Hntx-3) subfamily. In terms of assembly, monomer. Expressed by the venom gland.

It localises to the secreted. In terms of biological role, selective antagonist of neuronal tetrodotoxin (TTX)-sensitive voltage-gated sodium channels (IC(50)=1270 nM on Nav1.1/SCN1A, 270 nM on Nav1.2/SCN2A, 491 nM on Nav1.3/SCN3A and 232 nM on Nav1.7/SCN9A). This toxin suppress Nav1.7 current amplitude without significantly altering the activation, inactivation, and repriming kinetics. Short extreme depolarizations partially activate the toxin-bound channel, indicating voltage-dependent inhibition of this toxin. This toxin increases the deactivation of the Nav1.7 current after extreme depolarizations. The toxin-Nav1.7 complex is gradually dissociated upon prolonged strong depolarizations in a voltage-dependent manner, and the unbound toxin rebinds to Nav1.7 after a long repolarization. Moreover, analysis of chimeric channels showed that the DIIS3-S4 linker is critical for toxin binding to Nav1.7. These data are consistent with this toxin interacting with Nav1.7 site 4 and trapping the domain II voltage sensor in the closed state. The chain is Hainantoxin-III 8 from Cyriopagopus hainanus (Chinese bird spider).